Here is a 503-residue protein sequence, read N- to C-terminus: Aromatase 2 (503 aa).

Cysteine 437 contacts heme.

It belongs to the cytochrome P450 family. Heme serves as cofactor.

It localises to the membrane. The catalysed reaction is testosterone + 3 reduced [NADPH--hemoprotein reductase] + 3 O2 = 17beta-estradiol + formate + 3 oxidized [NADPH--hemoprotein reductase] + 4 H2O + 4 H(+). The enzyme catalyses androst-4-ene-3,17-dione + 3 reduced [NADPH--hemoprotein reductase] + 3 O2 = estrone + formate + 3 oxidized [NADPH--hemoprotein reductase] + 4 H2O + 4 H(+). Functionally, catalyzes the formation of aromatic C18 estrogens from C19 androgens. This is Aromatase 2 (CYP19A2) from Sus scrofa (Pig).